We begin with the raw amino-acid sequence, 821 residues long: Bifunctional dethiobiotin synthetase/7,8-diamino-pelargonic acid aminotransferase, mitochondrial (821 aa).

Residues 28-283 (SPAFAVFGAN…VHVLPPIPED (256 aa)) are dethiobiotin synthetase. An ATP-binding site is contributed by 39-44 (GVGKTL). Residue Thr43 participates in Mg(2+) binding. Thr72 provides a ligand contact to substrate. Glu194 is a binding site for Mg(2+). 194–197 (ETAG) lines the ATP pocket. Residues 316-820 (RLNSMQRKSK…AKVHRRLQKL (505 aa)) are 7,8-diamino-pelargonic acid aminotransferase. A (8S)-8-amino-7-oxononanoate-binding site is contributed by 374–375 (WW). Position 436 to 437 (436 to 437 (GS)) interacts with pyridoxal 5'-phosphate. Tyr482 serves as a coordination point for (8S)-8-amino-7-oxononanoate. Asp626 serves as a coordination point for pyridoxal 5'-phosphate. (8S)-8-amino-7-oxononanoate is bound by residues Lys655 and Gly689. Residue Lys655 is modified to N6-(pyridoxal phosphate)lysine. Ser691 provides a ligand contact to pyridoxal 5'-phosphate. Residue Arg787 participates in (8S)-8-amino-7-oxononanoate binding.

It in the N-terminal section; belongs to the dethiobiotin synthetase family. This sequence in the C-terminal section; belongs to the class-III pyridoxal-phosphate-dependent aminotransferase family. BioA subfamily. Mg(2+) is required as a cofactor. It depends on pyridoxal 5'-phosphate as a cofactor.

It is found in the mitochondrion. It carries out the reaction (7R,8S)-7,8-diammoniononanoate + CO2 + ATP = (4R,5S)-dethiobiotin + ADP + phosphate + 3 H(+). The enzyme catalyses (8S)-8-amino-7-oxononanoate + S-adenosyl-L-methionine = S-adenosyl-4-methylsulfanyl-2-oxobutanoate + (7R,8S)-7,8-diammoniononanoate. The protein operates within cofactor biosynthesis; biotin biosynthesis; biotin from 7,8-diaminononanoate: step 1/2. It functions in the pathway cofactor biosynthesis; biotin biosynthesis; 7,8-diaminononanoate from 8-amino-7-oxononanoate (SAM route): step 1/1. Its function is as follows. Bifunctional enzyme that catalyzes two different reactions involved in the biotin biosynthesis. Catalyzes a mechanistically unusual reaction, the ATP-dependent insertion of CO2 between the N7 and N8 nitrogen atoms of 7,8-diaminopelargonic acid (DAPA) to form an ureido ring. In terms of biological role, catalyzes the transfer of the alpha-amino group from S-adenosyl-L-methionine (SAM) to 7-keto-8-aminopelargonic acid (KAPA) to form 7,8-diaminopelargonic acid (DAPA). It is the only aminotransferase known to utilize SAM as an amino donor. In Oryza sativa subsp. japonica (Rice), this protein is Bifunctional dethiobiotin synthetase/7,8-diamino-pelargonic acid aminotransferase, mitochondrial (BIO3-BIO1).